The chain runs to 334 residues: Galactosylgalactosylxylosylprotein 3-beta-glucuronosyltransferase 1 (334 aa).

Residues Met-1–Asp-6 lie on the Cytoplasmic side of the membrane. The interval Lys-3 to Arg-5 is essential for transport from endoplasmic reticulum to Golgi apparatus and interaction with SAR1A. Residues Ile-7–Ser-27 traverse the membrane as a helical; Signal-anchor for type II membrane protein segment. The Lumenal segment spans residues Ser-28–Ile-334. Pro-91 to Tyr-93 serves as a coordination point for UDP-alpha-D-glucuronate. Phosphothreonine is present on residues Thr-103 and Thr-108. A UDP-alpha-D-glucuronate-binding site is contributed by Asp-122. N-linked (GlcNAc...) asparagine glycosylation is present at Asn-140. Positions 165 and 170 each coordinate UDP-alpha-D-glucuronate. Asn-184 carries N-linked (GlcNAc...) asparagine glycosylation. Asp-195 to Asp-197 contributes to the UDP-alpha-D-glucuronate binding site. Asp-197 serves as a coordination point for Mn(2+). Positions Phe-245–Asp-254 are interaction with galactose moiety of substrate glycoprotein. Glu-284 acts as the Proton donor/acceptor in catalysis. Asn-303 carries N-linked (GlcNAc...) asparagine glycosylation. A UDP-alpha-D-glucuronate-binding site is contributed by His-311–Arg-313.

This sequence belongs to the glycosyltransferase 43 family. As to quaternary structure, homodimer. Interacts with SAR1A. Mn(2+) is required as a cofactor. In terms of processing, the soluble form derives from the membrane form by proteolytic processing.

It is found in the golgi apparatus membrane. It localises to the secreted. The protein localises to the endoplasmic reticulum membrane. The enzyme catalyses 3-O-(beta-D-galactosyl-(1-&gt;3)-beta-D-galactosyl-(1-&gt;4)-beta-D-xylosyl)-L-seryl-[protein] + UDP-alpha-D-glucuronate = 3-O-(beta-D-GlcA-(1-&gt;3)-beta-D-Gal-(1-&gt;3)-beta-D-Gal-(1-&gt;4)-beta-D-Xyl)-L-seryl-[protein] + UDP + H(+). The protein operates within protein modification; protein glycosylation. In terms of biological role, involved in the biosynthesis of L2/HNK-1 carbohydrate epitope on glycoproteins. Can also play a role in glycosaminoglycan biosynthesis. Substrates include asialo-orosomucoid (ASOR), asialo-fetuin, and asialo-neural cell adhesion molecule. Requires sphingomyelin for activity: stearoyl-sphingomyelin was the most effective, followed by palmitoyl-sphingomyelin and lignoceroyl-sphingomyelin. Activity was demonstrated only for sphingomyelin with a saturated fatty acid and not for that with an unsaturated fatty acid, regardless of the length of the acyl group. This chain is Galactosylgalactosylxylosylprotein 3-beta-glucuronosyltransferase 1, found in Mus musculus (Mouse).